The following is a 117-amino-acid chain: DNA-binding protein DDB_G0278111 (117 aa).

The disordered stretch occupies residues Met1–Gly40. Positions Gln8 to Glu22 are enriched in low complexity. A compositionally biased stretch (basic and acidic residues) spans Ala23–Gln39.

It belongs to the PDCD5 family.

The polypeptide is DNA-binding protein DDB_G0278111 (Dictyostelium discoideum (Social amoeba)).